The chain runs to 235 residues: BPI fold-containing family A member 2 (235 aa).

A signal peptide spans 1–20 (MFQLGSLVVLCGLLIGTSES). Cys161 and Cys204 are disulfide-bonded.

It belongs to the BPI/LBP/Plunc superfamily. Plunc family. As to expression, expressed in parotid, submandibular and sublingual glands.

It localises to the secreted. Its function is as follows. Has strong antibacterial activity against P.aeruginosa. The chain is BPI fold-containing family A member 2 (Bpifa2) from Rattus norvegicus (Rat).